The sequence spans 197 residues: Signal-regulatory protein delta (197 aa).

A signal peptide spans 1-29 (MPIPASPLHPPLPSLLLYLLLELAGVTHV). The Ig-like V-type domain occupies 31-135 (HVQQTEMSQT…IKEYQSGRGT (105 aa)). The cysteines at positions 51 and 117 are disulfide-linked. Residues 139–158 (VTEQNPRPPKNRPAGRAGSR) are disordered. An N-linked (GlcNAc...) asparagine glycan is attached at asparagine 174.

It localises to the secreted. This chain is Signal-regulatory protein delta (SIRPD), found in Homo sapiens (Human).